The following is a 412-amino-acid chain: Shaggy-related protein kinase zeta (412 aa).

The span at 1–19 shows a compositional bias: pro residues; that stretch reads MTSIPLGPPQPPSLAPQPP. Residues 1 to 33 are disordered; that stretch reads MTSIPLGPPQPPSLAPQPPHLHGGDSLKRRPDI. The span at 22-33 shows a compositional bias: basic and acidic residues; sequence HGGDSLKRRPDI. The residue at position 26 (Ser26) is a Phosphoserine. The Protein kinase domain occupies 72–356; that stretch reads YMAERVVGTG…ALEACAHPFF (285 aa). Residues 78-86 and Lys101 each bind ATP; that span reads VGTGSFGIV. A Phosphoserine modification is found at Ser127. 2 positions are modified to phosphothreonine: Thr136 and Thr137. The active-site Proton acceptor is the Asp197. The residue at position 219 (Ser219) is a Phosphoserine. Tyr232 is modified (phosphotyrosine). Ser252 is subject to Phosphoserine. Thr293 bears the Phosphothreonine mark. Residue Ser342 is modified to Phosphoserine. The residue at position 346 (Thr346) is a Phosphothreonine.

This sequence belongs to the protein kinase superfamily. CMGC Ser/Thr protein kinase family. GSK-3 subfamily. Binds to KIB1. Interacts with beet curly top virus AL4/C4 and tomato golden mosaic virus AL4/AC4. Autophosphorylated mainly on threonine and serine residues.

It catalyses the reaction L-seryl-[protein] + ATP = O-phospho-L-seryl-[protein] + ADP + H(+). The enzyme catalyses L-threonyl-[protein] + ATP = O-phospho-L-threonyl-[protein] + ADP + H(+). Its function is as follows. May mediate extracellular signals to regulate transcription in differentiating cells. The protein is Shaggy-related protein kinase zeta (ASK6) of Arabidopsis thaliana (Mouse-ear cress).